The chain runs to 31 residues: Diuretic hormone class 2 (31 aa).

Residue proline 31 is modified to Proline amide.

The protein belongs to the diuretic hormone class 2 family.

The protein resides in the secreted. Its function is as follows. Regulation of fluid secretion. Stimulates primary urine secretion by Malpighian tubules and causes a dose-dependent stimulation of cAMP levels in the tubules. Has a nonselective effect on Na(+)/K(+) ion transport. In vitro, primarily elevates intracellular Ca(2+). The protein is Diuretic hormone class 2 of Apis mellifera (Honeybee).